Consider the following 130-residue polypeptide: Peptide methionine sulfoxide reductase MsrB (130 aa).

In terms of domain architecture, MsrB spans 1-122; it reads MKKREDMTEM…NSVSMAFEDS (122 aa). Zn(2+) contacts are provided by Cys39, Cys42, Cys88, and Cys91. Cys111 functions as the Nucleophile in the catalytic mechanism.

This sequence belongs to the MsrB Met sulfoxide reductase family. Zn(2+) is required as a cofactor.

It carries out the reaction L-methionyl-[protein] + [thioredoxin]-disulfide + H2O = L-methionyl-(R)-S-oxide-[protein] + [thioredoxin]-dithiol. The polypeptide is Peptide methionine sulfoxide reductase MsrB (Pasteurella multocida (strain Pm70)).